The sequence spans 77 residues: Translation initiation factor IF-1, chloroplastic (77 aa).

The 71-residue stretch at 1–71 folds into the S1-like domain; the sequence is MKEQKWIHEG…TRGRIIYRLR (71 aa).

It belongs to the IF-1 family. In terms of assembly, component of the 30S ribosomal translation pre-initiation complex which assembles on the 30S ribosome in the order IF-2 and IF-3, IF-1 and N-formylmethionyl-tRNA(fMet); mRNA recruitment can occur at any time during PIC assembly.

It localises to the plastid. Its subcellular location is the chloroplast. In terms of biological role, one of the essential components for the initiation of protein synthesis. Stabilizes the binding of IF-2 and IF-3 on the 30S subunit to which N-formylmethionyl-tRNA(fMet) subsequently binds. Helps modulate mRNA selection, yielding the 30S pre-initiation complex (PIC). Upon addition of the 50S ribosomal subunit IF-1, IF-2 and IF-3 are released leaving the mature 70S translation initiation complex. The chain is Translation initiation factor IF-1, chloroplastic from Montinia caryophyllacea (Wild clove bush).